The sequence spans 268 residues: Undecaprenyl-diphosphatase (268 aa).

The next 6 membrane-spanning stretches (helical) occupy residues 39–59, 75–95, 106–126, 179–199, 214–234, and 243–263; these read SETF…LIYK, LPYF…GLWV, LGPV…TEKV, TEFA…FAWI, LTLA…VKWL, and FIPF…LVAL.

This sequence belongs to the UppP family.

The protein resides in the cell inner membrane. It carries out the reaction di-trans,octa-cis-undecaprenyl diphosphate + H2O = di-trans,octa-cis-undecaprenyl phosphate + phosphate + H(+). Catalyzes the dephosphorylation of undecaprenyl diphosphate (UPP). Confers resistance to bacitracin. This is Undecaprenyl-diphosphatase from Methylacidiphilum infernorum (isolate V4) (Methylokorus infernorum (strain V4)).